The primary structure comprises 329 residues: Phosphate acyltransferase (329 aa).

This sequence belongs to the PlsX family. As to quaternary structure, homodimer. Probably interacts with PlsY.

Its subcellular location is the cytoplasm. The enzyme catalyses a fatty acyl-[ACP] + phosphate = an acyl phosphate + holo-[ACP]. The protein operates within lipid metabolism; phospholipid metabolism. In terms of biological role, catalyzes the reversible formation of acyl-phosphate (acyl-PO(4)) from acyl-[acyl-carrier-protein] (acyl-ACP). This enzyme utilizes acyl-ACP as fatty acyl donor, but not acyl-CoA. This Geobacillus sp. (strain WCH70) protein is Phosphate acyltransferase.